Consider the following 58-residue polypeptide: UPF0391 membrane protein Sputcn32_1322 (58 aa).

2 helical membrane-spanning segments follow: residues 6 to 26 (LMFLVVAIIAGLFGFTGIAGA) and 28 to 48 (AGIAKIIFFLFIVLLVISLLV).

It belongs to the UPF0391 family.

It is found in the cell membrane. This Shewanella putrefaciens (strain CN-32 / ATCC BAA-453) protein is UPF0391 membrane protein Sputcn32_1322.